Reading from the N-terminus, the 208-residue chain is Coiled-coil domain-containing protein 25 (208 aa).

The Extracellular segment spans residues 1–105 (MVFYFTSSSV…SNLKKTADMD (105 aa)). The interval 21–25 (KDKYE) is DNA-binding. N6-acetyllysine is present on K23. The helical transmembrane segment at 106 to 122 (VGQIGFHRQKDVKIVTV) threads the bilayer. Residues 117-187 (VKIVTVEKKV…REMDELRSYS (71 aa)) adopt a coiled-coil conformation. Residues 123–208 (EKKVNEILNR…QDGNDSDEFM (86 aa)) are Cytoplasmic-facing. The span at 145–184 (EAEKECRDHEERNEKKAQIQEMKRREKEEMKKKREMDELR) shows a compositional bias: basic and acidic residues. Positions 145-208 (EAEKECRDHE…QDGNDSDEFM (64 aa)) are disordered. At S204 the chain carries Phosphoserine.

It belongs to the CCDC25 family. As to quaternary structure, interacts (via cytoplasmic region) with ILK.

The protein localises to the cell membrane. The protein resides in the endomembrane system. Transmembrane receptor that senses neutrophil extracellular traps (NETs) and triggers the ILK-PARVB pathway to enhance cell motility. NETs are mainly composed of DNA fibers and are released by neutrophils to bind pathogens during inflammation. Formation of NETs is also associated with cancer metastasis, NET-DNA acting as a chemotactic factor to attract cancer cells. Specifically binds NETs on its extracellular region, in particular the 8-OHdG-enriched DNA present in NETs, and recruits ILK, initiating the ILK-PARVB cascade to induce cytoskeleton rearrangement and directional migration of cells. This is Coiled-coil domain-containing protein 25 from Bos taurus (Bovine).